Here is a 338-residue protein sequence, read N- to C-terminus: Tetraacyldisaccharide 4'-kinase (338 aa).

An ATP-binding site is contributed by T49 to T56.

The protein belongs to the LpxK family.

The enzyme catalyses a lipid A disaccharide + ATP = a lipid IVA + ADP + H(+). The protein operates within glycolipid biosynthesis; lipid IV(A) biosynthesis; lipid IV(A) from (3R)-3-hydroxytetradecanoyl-[acyl-carrier-protein] and UDP-N-acetyl-alpha-D-glucosamine: step 6/6. In terms of biological role, transfers the gamma-phosphate of ATP to the 4'-position of a tetraacyldisaccharide 1-phosphate intermediate (termed DS-1-P) to form tetraacyldisaccharide 1,4'-bis-phosphate (lipid IVA). The polypeptide is Tetraacyldisaccharide 4'-kinase (Geobacter metallireducens (strain ATCC 53774 / DSM 7210 / GS-15)).